A 239-amino-acid chain; its full sequence is Phosphoadenosine 5'-phosphosulfate reductase (239 aa).

Cysteine 235 acts as the Nucleophile; cysteine thiosulfonate intermediate in catalysis.

The protein belongs to the PAPS reductase family. CysH subfamily.

The protein resides in the cytoplasm. It catalyses the reaction [thioredoxin]-disulfide + sulfite + adenosine 3',5'-bisphosphate + 2 H(+) = [thioredoxin]-dithiol + 3'-phosphoadenylyl sulfate. It participates in sulfur metabolism; hydrogen sulfide biosynthesis; sulfite from sulfate: step 3/3. Functionally, catalyzes the formation of sulfite from phosphoadenosine 5'-phosphosulfate (PAPS) using thioredoxin as an electron donor. The chain is Phosphoadenosine 5'-phosphosulfate reductase from Thiocapsa roseopersicina.